The chain runs to 691 residues: Threonine--tRNA ligase (691 aa).

One can recognise a TGS domain in the interval methionine 1–threonine 66. The tract at residues aspartate 265–proline 571 is catalytic. Residues cysteine 370, histidine 421, and histidine 548 each coordinate Zn(2+).

Belongs to the class-II aminoacyl-tRNA synthetase family. In terms of assembly, homodimer. Zn(2+) serves as cofactor.

It is found in the cytoplasm. It carries out the reaction tRNA(Thr) + L-threonine + ATP = L-threonyl-tRNA(Thr) + AMP + diphosphate + H(+). Functionally, catalyzes the attachment of threonine to tRNA(Thr) in a two-step reaction: L-threonine is first activated by ATP to form Thr-AMP and then transferred to the acceptor end of tRNA(Thr). Also edits incorrectly charged L-seryl-tRNA(Thr). This is Threonine--tRNA ligase from Mycolicibacterium vanbaalenii (strain DSM 7251 / JCM 13017 / BCRC 16820 / KCTC 9966 / NRRL B-24157 / PYR-1) (Mycobacterium vanbaalenii).